Here is a 484-residue protein sequence, read N- to C-terminus: NADH-ubiquinone oxidoreductase chain 4 (484 aa).

The next 14 membrane-spanning stretches (helical) occupy residues 1-21 (MLTLLLIIPLVGALMLAPMQG), 33-53 (LALGTSLINFVLSIVLWGEFD), 77-97 (VDGISLYFVLLTTFITPICIL), 109-129 (YFLMCFLVLETLLIAVFVVLD), 130-150 (ILLFYVFFESVLIPLFLIVGI), 162-182 (FLLFLYTLFGSLFMLLAFLVI), 206-226 (LLWLAVFISMAIKTPLLPFHV), 236-256 (PLAGSVILAGLILKLATYGYM), 270-290 (FSPLVQTIAVITLIYASLATL), 295-315 (FKALVAYSSIGHMAVVVLGLF), 326-346 (LLLSIAHGVVSPALFILVGGV), 365-385 (YMPLFSIMFFVFTIFNAAVPL), 405-425 (VFAVLGSTGIVLSAAYSIWLY), and 448-468 (FMLLLPLLFVAVVFGIFPNII).

This sequence belongs to the complex I subunit 4 family.

The protein localises to the mitochondrion inner membrane. The enzyme catalyses a ubiquinone + NADH + 5 H(+)(in) = a ubiquinol + NAD(+) + 4 H(+)(out). Its function is as follows. Core subunit of the mitochondrial membrane respiratory chain NADH dehydrogenase (Complex I) that is believed to belong to the minimal assembly required for catalysis. Complex I functions in the transfer of electrons from NADH to the respiratory chain. The immediate electron acceptor for the enzyme is believed to be ubiquinone. The sequence is that of NADH-ubiquinone oxidoreductase chain 4 (ND4) from Mycosarcoma maydis (Corn smut fungus).